Here is a 315-residue protein sequence, read N- to C-terminus: Transposase for insertion sequence element IS640 (315 aa).

The HTH IS21-type domain maps to 5-66; it reads EDFYMIKQMR…PFMDYIDMRL (62 aa). The Integrase catalytic domain occupies 111–285; the sequence is FETQPGYQLQ…TPEQRSRWSR (175 aa).

Belongs to the transposase IS21/IS408/IS1162 family.

Functionally, involved in the transposition of the insertion sequence. In Shigella sonnei, this protein is Transposase for insertion sequence element IS640 (istA).